We begin with the raw amino-acid sequence, 320 residues long: MLFRFGFVANAMCLWDASPAKTLTYARYTKLSRSERKDALLSVTKANLTNTLRTIHYVVGHGIPLYRFSSSIVPLATHPDVLWDFVTPFRQEFCEIGGLVRKYDLRTSFHPNQFTLFTSPKQEITANAVKDMAYHYDMLDAMGIANRSVINIHVGGAYGDKQSALGRFRVNLKELPDVIKQRMTLENDDKTYTSEETLSVCEQEGIPFVFDYHHFYANPTDDADLDDILPRMIKTWQRIGLKPKVHLSSPKSESAIRSHADYVDANFILPVLERFRQWDTDIDFMIEAKEKDRALLRLVEELSAIRGVKRLAGGVLKWKA.

This sequence belongs to the uve1/UvsE family.

In terms of biological role, component in a DNA repair pathway. Removal of UV LIGHT damaged nucleotides. Recognizes pyrimidine dimers and cleave a phosphodiester bond immediately 5' to the lesion. This Bacillus velezensis (strain DSM 23117 / BGSC 10A6 / LMG 26770 / FZB42) (Bacillus amyloliquefaciens subsp. plantarum) protein is UV DNA damage endonuclease.